A 235-amino-acid chain; its full sequence is Purine nucleoside phosphorylase DeoD-type (235 aa).

Histidine 4 is a binding site for a purine D-ribonucleoside. Phosphate is bound by residues glycine 20, arginine 24, arginine 43, and 87–90; that span reads RVGT. A purine D-ribonucleoside is bound by residues 179–181 and 203–204; these read EME and SD. Aspartate 204 (proton donor) is an active-site residue.

This sequence belongs to the PNP/UDP phosphorylase family. As to quaternary structure, homohexamer; trimer of homodimers.

The catalysed reaction is a purine D-ribonucleoside + phosphate = a purine nucleobase + alpha-D-ribose 1-phosphate. It carries out the reaction a purine 2'-deoxy-D-ribonucleoside + phosphate = a purine nucleobase + 2-deoxy-alpha-D-ribose 1-phosphate. Catalyzes the reversible phosphorolytic breakdown of the N-glycosidic bond in the beta-(deoxy)ribonucleoside molecules, with the formation of the corresponding free purine bases and pentose-1-phosphate. This Exiguobacterium sibiricum (strain DSM 17290 / CCUG 55495 / CIP 109462 / JCM 13490 / 255-15) protein is Purine nucleoside phosphorylase DeoD-type.